A 309-amino-acid chain; its full sequence is Ribonuclease Z (309 aa).

Zn(2+) contacts are provided by histidine 63, histidine 65, aspartate 67, histidine 68, histidine 145, aspartate 216, and histidine 274. Catalysis depends on aspartate 67, which acts as the Proton acceptor.

This sequence belongs to the RNase Z family. In terms of assembly, homodimer. It depends on Zn(2+) as a cofactor.

The enzyme catalyses Endonucleolytic cleavage of RNA, removing extra 3' nucleotides from tRNA precursor, generating 3' termini of tRNAs. A 3'-hydroxy group is left at the tRNA terminus and a 5'-phosphoryl group is left at the trailer molecule.. Functionally, zinc phosphodiesterase, which displays some tRNA 3'-processing endonuclease activity. Probably involved in tRNA maturation, by removing a 3'-trailer from precursor tRNA. This is Ribonuclease Z from Streptococcus agalactiae serotype V (strain ATCC BAA-611 / 2603 V/R).